We begin with the raw amino-acid sequence, 102 residues long: MANKKIRIRLKAYEHRTLDTAAEKIVETATRTGATVAGPVPLPTERSLYTIIRATHKYKDSREQFEMRTHKRLIDIVNPTQKTVDALMKLDLPSGVNVKIKL.

The protein belongs to the universal ribosomal protein uS10 family. As to quaternary structure, part of the 30S ribosomal subunit.

Functionally, involved in the binding of tRNA to the ribosomes. This Streptococcus equi subsp. zooepidemicus (strain MGCS10565) protein is Small ribosomal subunit protein uS10.